Here is a 97-residue protein sequence, read N- to C-terminus: Type 1 phosphatases regulator YPI2 (97 aa).

The segment at 1–97 is disordered; the sequence is MNKKKTKICC…KMMEKKSNNT (97 aa). Residues 43–53 show a composition bias toward basic and acidic residues; sequence ENDKDLGFDER. Basic residues predominate over residues 54-65; it reads RKRRVERRRRKL.

It belongs to the YPI1 family.

The protein resides in the nucleus. Regulator of type 1 phosphatases which maintains protein phosphatase activity under strict control. The protein is Type 1 phosphatases regulator YPI2 (YPI2) of Vanderwaltozyma polyspora (strain ATCC 22028 / DSM 70294 / BCRC 21397 / CBS 2163 / NBRC 10782 / NRRL Y-8283 / UCD 57-17) (Kluyveromyces polysporus).